Here is a 1334-residue protein sequence, read N- to C-terminus: MVLTQQENLSVLVGQRFVCLLGKDLQVDPDTVSKWPWKSGIVRAASHKDLHCPEIKIFVEYDDESWENRTWLELYGPTVKMFLVEHNLVLADHASPSNPSVSVQCPAMVYKVLVGKFSLGSTACLQFLGEKDKVFLSKELVKPVRDRETLKQFMQDNKTFNKAFQELIRKSVDESRLLQAARNIISMPINVYSMDPSMQWFSGTITNVRTASRALEIKCEQLPSLKIIDPALLHVVLVHNYGDQNDKSKKPRASKRKSQDTESEDQTEVKQTRNEEVPSKDVTQKTSFLTYRRDDGKTLVVVDNPKATTNNLFNYMTPATEDQQKVQQSLSSKQSVPVGFGETLLGCAATTPGIQNAATPPPANSPPSFGAATPQGKGSQNLPGDTTVLNGDANREETNLFLSAAASQGNKRSMGFGIMESPSTFSSLSTMPSWSGQPNSENGLKSENLFAAFTKSSTVFPKGFEFSVKSFPEQKMLSVTDSPKTALQKTCVPQQEQNVIRKPENNHTSVKAIKPQEPPYTKSPNKTDGVTYPKSILLNPQKLKRLQQSGDCFVQDGSCNNIAPHLHKCRECRLDRFGRSREQRDSAVFCRFFHFRRLHFNKHGMLKEGGFLTPNKYDAEAINLWLPLASSVVDLDLDTAKYILANIGDHFCKLVMSEKEVMSSTDPSKQVAWKRAVRGVREMCDACDTTIFNLHWVCPKCGFGVCVDCYRMRKKSLSSGEEGNEMFSWLKCMKGQLHEPENLMPTQIVPGKALYDVCDIVHSVRGRWGIKSNCSCSNKHMRPVSKPVVKEEVKPSTPEPEPIKSLLAQPNVCTVPDPPAIPNKPPTPACSSPLSWLTNFPQTIVNKENKDNLFASTSKSEHKPLPSFASFGKPVSALQTFGSSILTPTTSNNSGFLRNLLNASTLKQETSDKSTPKILDDIFASLVQSRPLSDFDRKPQGLPIQPSLMGFNTPHYWLCDNRLLCLQDPNNKSNWNVFRECWKQGQPVMVSGVHNNLNSELWRPESFRREFGDQEADLVNCRTNDIITGATVGDFWDGFEDIPGRLKNDTGESMVLKLKDWPPGEDFRDTMLSRFEDLMNNIPLPEYTRREGKLNLAARLPTYFVRPDLGPKMYNAYGLITPEDRKYGTTNLHLDVSDAANVMVYVGIPKGEHDQDQEVLRTIQDGDADELTIKRFIEFKEKPGALWHIYAAKDTEKIRQFLKKVAEEEGHENPPDHDPIHDQSWYLDNILRKRLLQEHGVQGWAIVQFLGDAVFIPAGAPHQVHNLYSCIKVAEDFVSPEHVKHCFCLTQEFRYLSHTHTNHEDKLQVKNVIYHAVKDSIAILKANESSLGKL.

Disordered stretches follow at residues Asp243–Phe288, Pro352–Leu382, and Lys514–Pro533. Over residues Thr267–Thr283 the composition is skewed to basic and acidic residues. The C6-type zinc-finger motif lies at Cys684–Cys709. The LXXLL motif motif lies at Leu897–Leu901. The JmjC domain occupies Arg1089–Arg1294. Fe cation is bound by residues His1133, Asp1135, and His1262.

Belongs to the JHDM2 histone demethylase family. It depends on Fe(2+) as a cofactor.

It is found in the cytoplasm. The protein resides in the nucleus. The enzyme catalyses N(6),N(6)-dimethyl-L-lysyl(9)-[histone H3] + 2 2-oxoglutarate + 2 O2 = L-lysyl(9)-[histone H3] + 2 formaldehyde + 2 succinate + 2 CO2. In terms of biological role, histone demethylase that specifically demethylates 'Lys-9' of histone H3, thereby playing a central role in histone code. Preferentially demethylates mono- and dimethylated H3 'Lys-9' residue, with a preference for dimethylated residue, while it has weak or no activity on trimethylated H3 'Lys-9'. Demethylation of Lys residue generates formaldehyde and succinate. The chain is Lysine-specific demethylase 3A-B (kdm3a-b) from Xenopus laevis (African clawed frog).